The chain runs to 328 residues: L-serine dehydratase/L-threonine deaminase (328 aa).

Position 41 is an N6-(pyridoxal phosphate)lysine (K41). P128 serves as a coordination point for pyridoxal 5'-phosphate.

It belongs to the serine/threonine dehydratase family. Homodimer. It depends on pyridoxal 5'-phosphate as a cofactor. In terms of tissue distribution, predominantly expressed in the perivenous regions of the liver.

The protein resides in the cytoplasm. The enzyme catalyses L-serine = pyruvate + NH4(+). The catalysed reaction is L-threonine = 2-oxobutanoate + NH4(+). It participates in carbohydrate biosynthesis; gluconeogenesis. Functionally, catalyzes the pyridoxal-phosphate-dependent dehydrative deamination of L-threonine and L-serine to ammonia and alpha-ketobutyrate and pyruvate, respectively. The sequence is that of L-serine dehydratase/L-threonine deaminase (SDS) from Homo sapiens (Human).